The following is a 601-amino-acid chain: A-type ATP synthase subunit A (601 aa).

235-242 contributes to the ATP binding site; sequence GGFGTGKT.

This sequence belongs to the ATPase alpha/beta chains family. In terms of assembly, has multiple subunits with at least A(3), B(3), C, D, E, F, H, I and proteolipid K(x).

Its subcellular location is the cell membrane. The enzyme catalyses ATP + H2O + 4 H(+)(in) = ADP + phosphate + 5 H(+)(out). Its function is as follows. Component of the A-type ATP synthase that produces ATP from ADP in the presence of a proton gradient across the membrane. The A chain is the catalytic subunit. This is A-type ATP synthase subunit A from Thermofilum pendens (strain DSM 2475 / Hrk 5).